The primary structure comprises 304 residues: uncharacterized protein (304 aa).

10 consecutive transmembrane segments (helical) span residues 5 to 25 (TIIL…FIAI), 42 to 62 (FLLA…PLLF), 68 to 88 (IFQL…ILYG), 96 to 116 (IASV…FIFF), 120 to 140 (LYFF…IILF), 150 to 170 (TIKG…IYLY), 178 to 198 (ISIL…FLVI), 215 to 235 (ILAT…SYFY), 245 to 265 (ASTI…FVWG), and 268 to 288 (IGID…ITIF). EamA domains are found at residues 16 to 140 (ITWG…IILF) and 162 to 288 (TSHA…ITIF).

It belongs to the EamA transporter family.

It is found in the cell membrane. This is an uncharacterized protein from Buchnera aphidicola subsp. Schlechtendalia chinensis.